The sequence spans 371 residues: 3-methyl-D-ornithine--L-lysine ligase (371 aa).

Residue Lys18 participates in ATP binding. Residue 19–20 (LQ) coordinates L-lysine. ATP contacts are provided by residues Asp39, 57–58 (NI), and 80–81 (EN). Glu80 is an L-lysine binding site. The 185-residue stretch at 93-277 (EKFSCPVLFD…LIELLFRAFN (185 aa)) folds into the ATP-grasp domain. Residues Lys112, Lys139, Ser146, and 168–171 (EEYV) contribute to the ADP site. Residues 177–179 (SLE) and Asp233 each bind D-ornithine. Residues Glu235, Glu247, and Asp249 each contribute to the Mg(2+) site. Glu247 contacts ADP. D-ornithine-binding positions include 251–256 (RFPSQT) and Glu310. Residues Ser254 and Glu310 each coordinate L-lysine.

It belongs to the PylC family. It depends on Mg(2+) as a cofactor.

The enzyme catalyses (3R)-3-methyl-D-ornithine + L-lysine + ATP = (3R)-3-methyl-D-ornithyl-N(6)-L-lysine + ADP + phosphate + H(+). It functions in the pathway amino-acid biosynthesis; L-pyrrolysine biosynthesis. Its function is as follows. Is required for the biosynthesis of pyrrolysine. Catalyzes the ATP-dependent ligation between (3R)-3-methyl-D-ornithine and L-lysine, leading to (3R)-3-methyl-D-ornithyl-N6-L-lysine. Is also involved in the synthesis of pyrroline-carboxy-lysine (Pcl), a demethylated form of pyrrolysine that is generated by the pyrrolysine biosynthetic enzymes when the growth media is supplemented with D-ornithine. This is 3-methyl-D-ornithine--L-lysine ligase from Methanosarcina mazei (strain ATCC BAA-159 / DSM 3647 / Goe1 / Go1 / JCM 11833 / OCM 88) (Methanosarcina frisia).